The chain runs to 177 residues: Adenine phosphoribosyltransferase (177 aa).

Belongs to the purine/pyrimidine phosphoribosyltransferase family. Homodimer.

The protein resides in the cytoplasm. The catalysed reaction is AMP + diphosphate = 5-phospho-alpha-D-ribose 1-diphosphate + adenine. The protein operates within purine metabolism; AMP biosynthesis via salvage pathway; AMP from adenine: step 1/1. Functionally, catalyzes a salvage reaction resulting in the formation of AMP, that is energically less costly than de novo synthesis. This chain is Adenine phosphoribosyltransferase, found in Chlorobaculum parvum (strain DSM 263 / NCIMB 8327) (Chlorobium vibrioforme subsp. thiosulfatophilum).